The sequence spans 364 residues: Anthranilate phosphoribosyltransferase (364 aa).

5-phospho-alpha-D-ribose 1-diphosphate contacts are provided by residues glycine 101, 104-105, threonine 109, 111-114, 129-137, and glycine 141; these read GD, NLST, and KHGNRAASS. Glycine 101 is an anthranilate binding site. Mg(2+) is bound at residue serine 113. Asparagine 132 provides a ligand contact to anthranilate. Anthranilate is bound at residue arginine 187. Mg(2+) contacts are provided by aspartate 245 and glutamate 246.

The protein belongs to the anthranilate phosphoribosyltransferase family. As to quaternary structure, homodimer. Requires Mg(2+) as cofactor.

The enzyme catalyses N-(5-phospho-beta-D-ribosyl)anthranilate + diphosphate = 5-phospho-alpha-D-ribose 1-diphosphate + anthranilate. It participates in amino-acid biosynthesis; L-tryptophan biosynthesis; L-tryptophan from chorismate: step 2/5. In terms of biological role, catalyzes the transfer of the phosphoribosyl group of 5-phosphorylribose-1-pyrophosphate (PRPP) to anthranilate to yield N-(5'-phosphoribosyl)-anthranilate (PRA). The protein is Anthranilate phosphoribosyltransferase of Mycolicibacterium vanbaalenii (strain DSM 7251 / JCM 13017 / BCRC 16820 / KCTC 9966 / NRRL B-24157 / PYR-1) (Mycobacterium vanbaalenii).